The chain runs to 385 residues: WD repeat-containing protein RUP1 (385 aa).

7 WD repeats span residues 69-108 (TGSD…ESRD), 119-160 (CTPA…PVSE), 163-205 (EHGG…TLEE), 210-250 (GGGA…DPLI), 254-292 (GHTK…RVVR), 298-337 (VNSR…PVWV), and 348-385 (SDRR…GKQS).

Interacts with UVR8. Interacts directly with DHU1.

The protein localises to the nucleus. Its subcellular location is the cytoplasm. The protein resides in the cytosol. Functions in association with RUP2 as repressor of UV-B-induced photomorphogenesis mediated by UVR8 and HY5, likely in coordination with DHU1. Plays a crucial negative feedback regulatory role downstream of UVR8-COP1 to inhibit UVR8 function, balance UV-B-specific responses and ensure normal plant growth. Is involved in the regulation of photoperiodic flowering and vegetative development. The chain is WD repeat-containing protein RUP1 from Arabidopsis thaliana (Mouse-ear cress).